We begin with the raw amino-acid sequence, 80 residues long: uncharacterized protein (80 aa).

This sequence to B.cereus similar ORF in glnR 5'region.

This is an uncharacterized protein from Bacillus cereus.